Reading from the N-terminus, the 1040-residue chain is Eukaryotic translation initiation factor 3 subunit A (1040 aa).

A coiled-coil region spans residues 92-121 (LKKFIELAEKKVTEAQTKADEIQSSLESAA). In terms of domain architecture, PCI spans 339–523 (MTKAASFVLL…GVLTFDSDVF (185 aa)). Residues 608–906 (RVIIEKKKEA…AEARRAARKA (299 aa)) adopt a coiled-coil conformation. Composition is skewed to basic and acidic residues over residues 617–632 (AATD…EETR) and 795–901 (EVSE…EARR). Disordered stretches follow at residues 617 to 641 (AATD…QQLQ) and 795 to 1040 (EVSE…QQNQ). 4 stretches are compositionally biased toward low complexity: residues 908 to 917 (LEPAAPAARP), 945 to 955 (KEAAGGAAPEA), 978 to 993 (SGSS…NGAP), and 1004 to 1018 (SSSS…TPGS).

Belongs to the eIF-3 subunit A family. As to quaternary structure, component of the eukaryotic translation initiation factor 3 (eIF-3) complex.

It is found in the cytoplasm. In terms of biological role, RNA-binding component of the eukaryotic translation initiation factor 3 (eIF-3) complex, which is involved in protein synthesis of a specialized repertoire of mRNAs and, together with other initiation factors, stimulates binding of mRNA and methionyl-tRNAi to the 40S ribosome. The eIF-3 complex specifically targets and initiates translation of a subset of mRNAs involved in cell proliferation. This chain is Eukaryotic translation initiation factor 3 subunit A (tif32), found in Aspergillus terreus (strain NIH 2624 / FGSC A1156).